Reading from the N-terminus, the 325-residue chain is Flotillin-like protein FloA (325 aa).

Transmembrane regions (helical) follow at residues 4–24 (LGIV…FSFI) and 26–46 (VGLW…TLVA).

The protein belongs to the flotillin-like FloA family. In terms of assembly, homooligomerizes.

Its subcellular location is the cell membrane. It is found in the membrane raft. Functionally, found in functional membrane microdomains (FMM) that may be equivalent to eukaryotic membrane rafts. FMMs are highly dynamic and increase in number as cells age. Flotillins are thought to be important factors in membrane fluidity. The sequence is that of Flotillin-like protein FloA from Thermus thermophilus (strain ATCC BAA-163 / DSM 7039 / HB27).